We begin with the raw amino-acid sequence, 407 residues long: Peptidase T (407 aa).

His-81 serves as a coordination point for Zn(2+). The active site involves Asp-83. A Zn(2+)-binding site is contributed by Asp-142. Glu-176 acts as the Proton acceptor in catalysis. Zn(2+)-binding residues include Glu-177, Asp-199, and His-381.

This sequence belongs to the peptidase M20B family. Requires Zn(2+) as cofactor.

It localises to the cytoplasm. It catalyses the reaction Release of the N-terminal residue from a tripeptide.. In terms of biological role, cleaves the N-terminal amino acid of tripeptides. The polypeptide is Peptidase T (Streptococcus pneumoniae (strain P1031)).